The sequence spans 369 residues: 4-hydroxy-3-methylbut-2-en-1-yl diphosphate synthase (flavodoxin) (369 aa).

[4Fe-4S] cluster-binding residues include Cys270, Cys273, Cys305, and Glu312.

It belongs to the IspG family. [4Fe-4S] cluster serves as cofactor.

It catalyses the reaction (2E)-4-hydroxy-3-methylbut-2-enyl diphosphate + oxidized [flavodoxin] + H2O + 2 H(+) = 2-C-methyl-D-erythritol 2,4-cyclic diphosphate + reduced [flavodoxin]. Its pathway is isoprenoid biosynthesis; isopentenyl diphosphate biosynthesis via DXP pathway; isopentenyl diphosphate from 1-deoxy-D-xylulose 5-phosphate: step 5/6. Converts 2C-methyl-D-erythritol 2,4-cyclodiphosphate (ME-2,4cPP) into 1-hydroxy-2-methyl-2-(E)-butenyl 4-diphosphate. This chain is 4-hydroxy-3-methylbut-2-en-1-yl diphosphate synthase (flavodoxin), found in Pseudomonas syringae pv. tomato (strain ATCC BAA-871 / DC3000).